The sequence spans 476 residues: Aspartyl/glutamyl-tRNA(Asn/Gln) amidotransferase subunit B (476 aa).

Belongs to the GatB/GatE family. GatB subfamily. As to quaternary structure, heterotrimer of A, B and C subunits.

The enzyme catalyses L-glutamyl-tRNA(Gln) + L-glutamine + ATP + H2O = L-glutaminyl-tRNA(Gln) + L-glutamate + ADP + phosphate + H(+). It catalyses the reaction L-aspartyl-tRNA(Asn) + L-glutamine + ATP + H2O = L-asparaginyl-tRNA(Asn) + L-glutamate + ADP + phosphate + 2 H(+). Its function is as follows. Allows the formation of correctly charged Asn-tRNA(Asn) or Gln-tRNA(Gln) through the transamidation of misacylated Asp-tRNA(Asn) or Glu-tRNA(Gln) in organisms which lack either or both of asparaginyl-tRNA or glutaminyl-tRNA synthetases. The reaction takes place in the presence of glutamine and ATP through an activated phospho-Asp-tRNA(Asn) or phospho-Glu-tRNA(Gln). This Neisseria meningitidis serogroup C / serotype 2a (strain ATCC 700532 / DSM 15464 / FAM18) protein is Aspartyl/glutamyl-tRNA(Asn/Gln) amidotransferase subunit B.